A 213-amino-acid chain; its full sequence is MRMNEPVDAQPAPSFLPMSRRFRGYLPVVVDVETGGFDWNKHALLEIACVPIEMDTDGRFFPGETASAHLVPAPGLEIDPKSLEITGIVLDHPFRFAKQEKDALDHVFAPVRAAVKKYGCQRAILVGHNAHFDLNFLNAAVARVGHKRNPFHPFSVFDTVTLAGVAYGQTVLARAAQAAGLDWNAADAHSAVYDTEQTARLFCKIANAWPGPV.

The Exonuclease domain occupies 28-202; the sequence is VVVDVETGGF…YDTEQTARLF (175 aa). Positions 31, 33, 189, and 194 each coordinate Mg(2+). The Proton donor/acceptor role is filled by His-189.

It belongs to the RNase T family. Homodimer. The cofactor is Mg(2+).

Functionally, trims short 3' overhangs of a variety of RNA species, leaving a one or two nucleotide 3' overhang. Responsible for the end-turnover of tRNA: specifically removes the terminal AMP residue from uncharged tRNA (tRNA-C-C-A). Also appears to be involved in tRNA biosynthesis. The chain is Ribonuclease T from Xanthomonas euvesicatoria pv. vesicatoria (strain 85-10) (Xanthomonas campestris pv. vesicatoria).